Reading from the N-terminus, the 158-residue chain is MERQIINRKKRVFSLEPNKNPSAVFTRKYTSHLVPALKKLNMNKNSSKQTVKHEVDMALALSAQEFAWSRFLLQKLSSSSNPTTTTSSSSDGIRILERPDKEGGNEEGGIEERLRELKKLLPGGEEMNVEEMLSEIGNYIKCLELQTIALKSIVQDST.

Low complexity predominate over residues 77-90; the sequence is SSSSNPTTTTSSSS. The segment at 77-110 is disordered; sequence SSSSNPTTTTSSSSDGIRILERPDKEGGNEEGGI. The segment covering 94 to 110 has biased composition (basic and acidic residues); that stretch reads RILERPDKEGGNEEGGI. The 50-residue stretch at 94 to 143 folds into the bHLH; atypical domain; sequence RILERPDKEGGNEEGGIEERLRELKKLLPGGEEMNVEEMLSEIGNYIKCL.

This sequence belongs to the bHLH protein family.

It localises to the nucleus. This chain is Transcription factor bHLH146 (BHLH146), found in Arabidopsis thaliana (Mouse-ear cress).